The following is a 48-amino-acid chain: Large ribosomal subunit protein bL32 (48 aa).

The segment covering 1-20 (MAVPKRRVSKTRAAKRRTHY) has biased composition (basic residues). The disordered stretch occupies residues 1 to 48 (MAVPKRRVSKTRAAKRRTHYKVSLPMPIKDKDGSYKMPHRANPTTKEY).

The protein belongs to the bacterial ribosomal protein bL32 family.

This is Large ribosomal subunit protein bL32 (rpmF) from Campylobacter jejuni subsp. jejuni serotype O:2 (strain ATCC 700819 / NCTC 11168).